The primary structure comprises 480 residues: MGQLVSFFQEIPVFFQEALNIALAVVTLLAIVKGVLNLWKSGLFQLLMFLILAGRSCSFRIGYHTSFESFTMTIGGVFHELPALCKVNDTYNLVRLSHNSSLALSVEYGDTGTVMCEHGHVVSGNYTECTGASEEYNWVLDWVLRGLQHDFSRDPVICCEPKKKTNAEFQFRLNLTQRHKGDHYQNKIKTALTHLFGPFAYNEKDPKIFVTMRNTTWTNQCVMSHTDSLRLLASNGGNSFSGRGLKAFFSWSLSDSTGVDMPGGYCLEKWMLIASELKCFGNTALAKCNLKHDSEFCDMIKLFDFNKNAISKLNNNTIEAVNQLTKTVNSLISDNLLMKNRLRELLKVPYCNYTRFWYVNHTRTGEHSLPKCWLVNNGSYLNESDFRNEWILESDHLISEMLSKEYQERQGRTPLTLVDLCFWSAVFYTTTLFLHLVGFPTHRHISGEPCPLPHRLNRHGACNCGRFKRLKKPLVWYKHH.

The N-myristoyl glycine; by host moiety is linked to residue Gly-2. Residues 2–17 (GQLVSFFQEIPVFFQE) lie on the Extracellular side of the membrane. A helical membrane pass occupies residues 18 to 33 (ALNIALAVVTLLAIVK). Residues 34–58 (GVLNLWKSGLFQLLMFLILAGRSCS) are Cytoplasmic-facing. Cys-57 is a binding site for Zn(2+). Residues 59–419 (FRIGYHTSFE…QGRTPLTLVD (361 aa)) are Extracellular-facing. 4 disulfide bridges follow: Cys-85–Cys-221, Cys-266–Cys-279, Cys-288–Cys-297, and Cys-351–Cys-372. N-linked (GlcNAc...) asparagine; by host glycosylation is found at Asn-88, Asn-174, and Asn-214. N-linked (GlcNAc...) asparagine; by host glycans are attached at residues Asn-352, Asn-360, Asn-377, and Asn-382. A helical transmembrane segment spans residues 420–440 (LCFWSAVFYTTTLFLHLVGFP). The Cytoplasmic portion of the chain corresponds to 441–480 (THRHISGEPCPLPHRLNRHGACNCGRFKRLKKPLVWYKHH). Zn(2+)-binding residues include His-442, His-444, Cys-450, His-454, Cys-462, Cys-464, and His-480.

Belongs to the arenaviridae GPC protein family. As to quaternary structure, interacts with glycoprotein G2. Part of the GP complex (GP-C) together with glycoprotein G1 and glycoprotein G2. The GP-complex interacts with protein Z, which interacts with ribonucleocapsid; these interactions may induce virion budding. In terms of assembly, homotrimer; disulfide-linked. In pre-fusion state, G1 homotrimers bind G2 homotrimers via ionic interactions. Part of the GP complex (GP-C) together with glycoprotein G2 and the stable signal peptide. The GP-complex interacts with protein Z, which interacts with ribonucleocapsid; these interactions may induce virion budding. Homotrimer. Interacts with the stable signal peptide. In pre-fusion state, G2 homotrimers bind G1 homotrimers via ionic interactions. Part of the GP complex (GP-C) together with glycoprotein G1 and the stable signal peptide. Acidification in the endosome triggers rearrangements, which ultimately leads to a 6 helix bundle formed by the two heptad repeat domains (HR1 and HR2) in post-fusion state. The GP-complex interacts with protein Z, which interacts with ribonucleocapsid; these interactions may induce virion budding. In terms of processing, specific enzymatic cleavages in vivo yield mature proteins. GP-C polyprotein is cleaved in the endoplasmic reticulum by the host protease MBTPS1. Only cleaved glycoprotein is incorporated into virions. Post-translationally, the SSP remains stably associated with the GP complex following cleavage by signal peptidase and plays crucial roles in the trafficking of GP through the secretory pathway. Myristoylation is necessary for GP2-mediated fusion activity.

The protein localises to the virion membrane. The protein resides in the host endoplasmic reticulum membrane. Its subcellular location is the host Golgi apparatus membrane. It is found in the host cell membrane. Functions as a cleaved signal peptide that is retained as the third component of the GP complex (GP-C). Helps to stabilize the spike complex in its native conformation. The SSP is required for efficient glycoprotein expression, post-translational maturation cleavage of G1 and G2, glycoprotein transport to the cell surface plasma membrane, formation of infectious virus particles, and acid pH-dependent glycoprotein-mediated cell fusion. Functionally, forms the virion spikes together with glycoprotein G2. The glycoprotein spike trimers are connected to the underlying matrix. Interacts with the host receptor leading to virus endocytosis. In terms of biological role, forms the virion spikes together with glycoprotein G1. The glycoprotein spike trimers are connected to the underlying matrix. Class I viral fusion protein that directs fusion of viral and host endosomal membranes, leading to delivery of the nucleocapsid into the cytoplasm. Membrane fusion is mediated by irreversible conformational changes induced by acidification. The chain is Pre-glycoprotein polyprotein GP complex from Cupixi mammarenavirus (isolate Rat/Brasil/BeAn 119303/1970) (CPXV).